Here is a 340-residue protein sequence, read N- to C-terminus: Dihydroorotate dehydrogenase (quinone) (340 aa).

FMN is bound by residues 61–65 (AGLDK) and Thr-85. Residue Lys-65 coordinates substrate. Residue 110–114 (NRMGF) participates in substrate binding. The FMN site is built by Asn-138 and Asn-171. Residue Asn-171 participates in substrate binding. The active-site Nucleophile is Ser-174. Position 176 (Asn-176) interacts with substrate. Lys-216 and Thr-244 together coordinate FMN. 245–246 (NT) contributes to the substrate binding site. FMN-binding positions include Gly-267, Gly-296, and 317 to 318 (YS).

The protein belongs to the dihydroorotate dehydrogenase family. Type 2 subfamily. Monomer. Requires FMN as cofactor.

It is found in the cell membrane. The catalysed reaction is (S)-dihydroorotate + a quinone = orotate + a quinol. It functions in the pathway pyrimidine metabolism; UMP biosynthesis via de novo pathway; orotate from (S)-dihydroorotate (quinone route): step 1/1. Catalyzes the conversion of dihydroorotate to orotate with quinone as electron acceptor. The polypeptide is Dihydroorotate dehydrogenase (quinone) (Pseudomonas putida (strain ATCC 47054 / DSM 6125 / CFBP 8728 / NCIMB 11950 / KT2440)).